Reading from the N-terminus, the 497-residue chain is Glycerol kinase (497 aa).

An ADP-binding site is contributed by Thr-12. Thr-12, Thr-13, and Ser-14 together coordinate ATP. Thr-12 serves as a coordination point for sn-glycerol 3-phosphate. Residue Arg-16 coordinates ADP. Sn-glycerol 3-phosphate-binding residues include Arg-82, Glu-83, Tyr-134, and Asp-243. Positions 82, 83, 134, 243, and 244 each coordinate glycerol. Thr-265 and Gly-308 together coordinate ADP. Thr-265, Gly-308, Gln-312, and Gly-411 together coordinate ATP. ADP is bound at residue Gly-411.

This sequence belongs to the FGGY kinase family.

It catalyses the reaction glycerol + ATP = sn-glycerol 3-phosphate + ADP + H(+). It participates in polyol metabolism; glycerol degradation via glycerol kinase pathway; sn-glycerol 3-phosphate from glycerol: step 1/1. Its activity is regulated as follows. Inhibited by fructose 1,6-bisphosphate (FBP). Functionally, key enzyme in the regulation of glycerol uptake and metabolism. Catalyzes the phosphorylation of glycerol to yield sn-glycerol 3-phosphate. In Xanthobacter autotrophicus (strain ATCC BAA-1158 / Py2), this protein is Glycerol kinase.